A 399-amino-acid chain; its full sequence is Phosphoglycerate kinase (399 aa).

Substrate contacts are provided by residues 21-23, Arg37, 60-63, Arg119, and Arg152; these read DFN and HLGR. ATP is bound by residues Lys205, Gly296, Glu327, and 353 to 356; that span reads GGDT.

It belongs to the phosphoglycerate kinase family. Monomer.

The protein localises to the cytoplasm. It carries out the reaction (2R)-3-phosphoglycerate + ATP = (2R)-3-phospho-glyceroyl phosphate + ADP. It participates in carbohydrate degradation; glycolysis; pyruvate from D-glyceraldehyde 3-phosphate: step 2/5. In Sulfurimonas denitrificans (strain ATCC 33889 / DSM 1251) (Thiomicrospira denitrificans (strain ATCC 33889 / DSM 1251)), this protein is Phosphoglycerate kinase.